The primary structure comprises 176 residues: Ribosome maturation factor RimM (176 aa).

A PRC barrel domain is found at 94–176 (KDEFFYFEIL…RFGFEILQNS (83 aa)).

Belongs to the RimM family. In terms of assembly, binds ribosomal protein uS19.

It localises to the cytoplasm. An accessory protein needed during the final step in the assembly of 30S ribosomal subunit, possibly for assembly of the head region. Essential for efficient processing of 16S rRNA. May be needed both before and after RbfA during the maturation of 16S rRNA. It has affinity for free ribosomal 30S subunits but not for 70S ribosomes. This chain is Ribosome maturation factor RimM, found in Campylobacter hominis (strain ATCC BAA-381 / DSM 21671 / CCUG 45161 / LMG 19568 / NCTC 13146 / CH001A).